The primary structure comprises 199 residues: RNA pyrophosphohydrolase (199 aa).

A Nudix hydrolase domain is found at 6–154 (GYRPNVGIVL…KREVYELALS (149 aa)). Residues 38–59 (GGIQHGESPEQAMYRELHEEVG) carry the Nudix box motif.

It belongs to the Nudix hydrolase family. RppH subfamily. A divalent metal cation serves as cofactor.

Functionally, accelerates the degradation of transcripts by removing pyrophosphate from the 5'-end of triphosphorylated RNA, leading to a more labile monophosphorylated state that can stimulate subsequent ribonuclease cleavage. The chain is RNA pyrophosphohydrolase from Polynucleobacter asymbioticus (strain DSM 18221 / CIP 109841 / QLW-P1DMWA-1) (Polynucleobacter necessarius subsp. asymbioticus).